The sequence spans 136 residues: Protein NrdI (136 aa).

Belongs to the NrdI family.

Its function is as follows. Probably involved in ribonucleotide reductase function. This Salmonella paratyphi B (strain ATCC BAA-1250 / SPB7) protein is Protein NrdI.